The chain runs to 937 residues: Protocadherin alpha-7 (937 aa).

A signal peptide spans 1-29 (MVCPNGYDPGGRHLLLFIIILAAWEAGRG). 6 Cadherin domains span residues 30-133 (QLHY…PPVF), 134-242 (PATQ…APVF), 243-350 (DRTL…APQL), 351-455 (TLTS…APAF), 456-565 (AQPE…APAL), and 581-678 (VPRS…APKA). The Extracellular portion of the chain corresponds to 30–697 (QLHYSVPEEA…GPETELVDVN (668 aa)). Residues C96 and C102 are joined by a disulfide bond. Residues N254 and N265 are each glycosylated (N-linked (GlcNAc...) asparagine). N548 carries an N-linked (GlcNAc...) asparagine glycan. The helical transmembrane segment at 698 to 718 (VYLIIAICAVSSLLVLTLLLY) threads the bilayer. The Cytoplasmic segment spans residues 719–937 (TALRCSAPSS…GNSTTDNSDQ (219 aa)). Disordered regions lie at residues 756 to 795 (QRVC…DWRY) and 817 to 843 (AGPG…EVSP). PXXP repeat units follow at residues 774–777 (PSLP), 786–789 (PRQP), 819–822 (PGGP), 860–863 (PGNP), and 878–881 (PGSP). Residues 774 to 881 (PSLPQGPSST…PDKFIIPGSP (108 aa)) form a 5 X 4 AA repeats of P-X-X-P region. Over residues 775–787 (SLPQGPSSTDNPR) the composition is skewed to polar residues. The tract at residues 888–937 (QEPANSQIDKSDFITFGKKEETKKKKKKKKGNKTQEKKEKGNSTTDNSDQ) is disordered. Residues 896 to 910 (DKSDFITFGKKEETK) are compositionally biased toward basic and acidic residues.

Forms homodimers in trans (molecules expressed by two different cells). Forms promiscuous heterodimers in cis (at the plasma membrane of the same cell) with other protocadherins.

The protein localises to the cell membrane. Its function is as follows. Calcium-dependent cell-adhesion protein involved in cells self-recognition and non-self discrimination. Thereby, it is involved in the establishment and maintenance of specific neuronal connections in the brain. The protein is Protocadherin alpha-7 of Pan troglodytes (Chimpanzee).